The chain runs to 341 residues: Ribose-phosphate pyrophosphokinase 5 (341 aa).

3 residues coordinate Mg(2+): Asp152, His154, and Asp167.

Belongs to the ribose-phosphate pyrophosphokinase family.

It localises to the cytoplasm. It carries out the reaction D-ribose 5-phosphate + ATP = 5-phospho-alpha-D-ribose 1-diphosphate + AMP + H(+). Its pathway is metabolic intermediate biosynthesis; 5-phospho-alpha-D-ribose 1-diphosphate biosynthesis; 5-phospho-alpha-D-ribose 1-diphosphate from D-ribose 5-phosphate (route I): step 1/1. In terms of biological role, 5-phosphoribose 1-diphosphate synthase involved in nucleotide, histidine, and tryptophan biosynthesis. Active in heteromultimeric complexes with other 5-phosphoribose 1-diphosphate synthases. The sequence is that of Ribose-phosphate pyrophosphokinase 5 from Schizosaccharomyces pombe (strain 972 / ATCC 24843) (Fission yeast).